A 323-amino-acid polypeptide reads, in one-letter code: HPr kinase/phosphorylase (323 aa).

Active-site residues include His-146 and Lys-167. 161-168 (GESGLGKS) provides a ligand contact to ATP. A Mg(2+)-binding site is contributed by Ser-168. Asp-185 (proton acceptor; for phosphorylation activity. Proton donor; for dephosphorylation activity) is an active-site residue. Residues 209 to 218 (LEVRGLGLLD) are important for the catalytic mechanism of both phosphorylation and dephosphorylation. Glu-210 lines the Mg(2+) pocket. Arg-250 is an active-site residue. The important for the catalytic mechanism of dephosphorylation stretch occupies residues 271–276 (QVAAGR).

The protein belongs to the HPrK/P family. In terms of assembly, homohexamer. The cofactor is Mg(2+).

It catalyses the reaction [HPr protein]-L-serine + ATP = [HPr protein]-O-phospho-L-serine + ADP + H(+). It carries out the reaction [HPr protein]-O-phospho-L-serine + phosphate + H(+) = [HPr protein]-L-serine + diphosphate. Functionally, catalyzes the ATP- as well as the pyrophosphate-dependent phosphorylation of a specific serine residue in HPr, a phosphocarrier protein of the phosphoenolpyruvate-dependent sugar phosphotransferase system (PTS). HprK/P also catalyzes the pyrophosphate-producing, inorganic phosphate-dependent dephosphorylation (phosphorolysis) of seryl-phosphorylated HPr (P-Ser-HPr). In Cupriavidus metallidurans (strain ATCC 43123 / DSM 2839 / NBRC 102507 / CH34) (Ralstonia metallidurans), this protein is HPr kinase/phosphorylase.